Here is a 333-residue protein sequence, read N- to C-terminus: Fructose-1,6-bisphosphatase class 1 (333 aa).

Mg(2+)-binding residues include Glu92, Asp113, Leu115, and Asp116. Substrate is bound by residues 116-119 (DGSS), Asn209, Tyr242, and Lys272. Glu278 contributes to the Mg(2+) binding site.

This sequence belongs to the FBPase class 1 family. In terms of assembly, homotetramer. Mg(2+) serves as cofactor.

Its subcellular location is the cytoplasm. The catalysed reaction is beta-D-fructose 1,6-bisphosphate + H2O = beta-D-fructose 6-phosphate + phosphate. Its pathway is carbohydrate biosynthesis; Calvin cycle. The sequence is that of Fructose-1,6-bisphosphatase class 1 from Chlorobium luteolum (strain DSM 273 / BCRC 81028 / 2530) (Pelodictyon luteolum).